Here is a 178-residue protein sequence, read N- to C-terminus: Large ribosomal subunit protein bL25 (178 aa).

The protein belongs to the bacterial ribosomal protein bL25 family. CTC subfamily. Part of the 50S ribosomal subunit; part of the 5S rRNA/L5/L18/L25 subcomplex. Contacts the 5S rRNA. Binds to the 5S rRNA independently of L5 and L18.

Its function is as follows. This is one of the proteins that binds to the 5S RNA in the ribosome where it forms part of the central protuberance. The polypeptide is Large ribosomal subunit protein bL25 (Helicobacter hepaticus (strain ATCC 51449 / 3B1)).